Reading from the N-terminus, the 249-residue chain is T-cell immunoreceptor with Ig and ITIM domains (249 aa).

Positions 1-28 (MHGWLLLVWVQGLIQAAFLATAIGATAG) are cleaved as a signal peptide. The 99-residue stretch at 29 to 127 (TIDTKRNISA…GGIYKGRIFL (99 aa)) folds into the Ig-like V-type domain. At 29 to 148 (TIDTKRNISA…LAQFQTAPLG (120 aa)) the chain is on the extracellular side. A homodimerization region spans residues 35–45 (NISAEEGGSVI). An intrachain disulfide couples Cys48 to Cys111. The N-linked (GlcNAc...) asparagine glycan is linked to Asn104. Residues 149–169 (GTMAAVLGLICLMVTGVTVLA) form a helical membrane-spanning segment. Over 170–249 (RKDKSIRMHS…ESFIAVSKTG (80 aa)) the chain is Cytoplasmic. The tract at residues 182 to 222 (SGLGRTEAEPQEWNLRSLSSPGSPVQTQTAPAGPCGEQAED) is disordered. Over residues 195 to 211 (NLRSLSSPGSPVQTQTA) the composition is skewed to polar residues. The short motif at 234-239 (LSYRSL) is the ITIM motif element.

As to quaternary structure, homodimer in cis; binds with high affinity to PVR, forming a heterotetrameric assembly of two TIGIT and two PVR molecules. Binds with lower affinity to NECTIN2 and NECTIN3. Interacts with GRB2. Interacts with NECTIN4.

The protein localises to the cell membrane. Functionally, inhibitory receptor that plays a role in the modulation of immune responses. Suppresses T-cell activation by promoting the generation of mature immunoregulatory dendritic cells. Upon binding to its ligands PVR/CD155 or NECTIN2/CD112, which are expressed on antigen-presenting cells, sends inhibitory signals to the T-cell or NK cell. Mechanistically, interaction with ligand leads to phosphorylation of the cytoplasmic tail by Src family tyrosine kinases such as FYN or LCK, allowing subsequent binding to adapter GRB2 and SHIP1/INPP5D. In turn, inhibits PI3K and MAPK signaling cascades. In addition, associates with beta-arrestin-2/ARRB2 to recruit SHIP1/INPP5D that suppresses autoubiquitination of TRAF6 and subsequently inhibits NF-kappa-B signaling pathway. Also acts as a receptor for NECTIN4 to inhibit NK cell cytotoxicity. In Mus musculus (Mouse), this protein is T-cell immunoreceptor with Ig and ITIM domains.